The following is a 713-amino-acid chain: MKKFLKSTAALALGLSLTFGLFSPAQAAPDTSVSNKQNFSTDVIYQIFTDRFSDGNPANNPTGAAFDGTCTNLRLYCGGDWQGIINKINDGYLTGMGVTAIWISQPVENIYSIINYSGVNNTAYHGYWARDFKKTNPAYGTIADFQNLIAAAHAKNIKVIIDFAPNHTSPASSDQPSFAENGRLYDNGTLLGGYTNDTQNLFHHNGGTDFSTTENGIYKNLYDLADLNHNNSTVDVYLKDAIKMWLDLGIDGIRMDAVKHMPFGWQKSFMAAVNNYKPVFTFGEWFLGVNEVSPENHKFANESGMSLLDFRFAQKVRQVFRDNTDNMYGLKAMLEGSAADYAQVDDQVTFIDNHDMERFHASNANRRKLEQALAFTLTSRGVPAIYYGTEQYMSGGTDPDNRARIPSFSTSTTAYQVIQKLAPLRKCNPAIAYGSTQERWINNDVLIYERKFGSNVAVVAVNRNLNAPASISGLVTSLPQGSYNDVLGGLLNGNTLSVGSGGAASNFTLAAGGTAVWQYTAATATPTIGHVGPMMAKPGVTITIDGRGFGSSKGTVYFGTTAVSGADITSWEDTQIKVKIPAVAGGNYNIKVANAAGTASNVYDNFEVLSGDQVSVRFVVNNATTALGQNVYLTGSVSELGNWDPAKAIGPMYNQVVYQYPNWYYDVSVPAGKTIEFKFLKKQGSTVTWEGGSNHTFTAPSSGTATINVNWQP.

Positions 1-27 are cleaved as a signal peptide; it reads MKKFLKSTAALALGLSLTFGLFSPAQA. Positions 28 to 165 are A1; it reads APDTSVSNKQ…NIKVIIDFAP (138 aa). The Ca(2+) site is built by Asp-54, Asn-56, Asn-59, and Asn-60. A disulfide bridge links Cys-70 with Cys-77. 2 residues coordinate Ca(2+): Gly-78 and Asp-80. 127–128 contributes to the substrate binding site; that stretch reads YW. Asn-166 contributes to the Ca(2+) binding site. The segment at 166–229 is b; sequence NHTSPASSDQ…NLYDLADLNH (64 aa). Substrate-binding positions include His-167 and 172-174; that span reads SSD. Ile-217 is a binding site for Ca(2+). 220 to 223 lines the substrate pocket; the sequence is NLYD. A Ca(2+)-binding site is contributed by Asp-226. The interval 230–433 is A2; the sequence is NNSTVDVYLK…LRKCNPAIAY (204 aa). Position 254 (Arg-254) interacts with substrate. Catalysis depends on Asp-256, which acts as the Nucleophile. 259 to 260 contacts substrate; the sequence is KH. His-260 is a Ca(2+) binding site. Glu-284 functions as the Proton donor in the catalytic mechanism. Ala-342 provides a ligand contact to Ca(2+). The substrate site is built by His-354, Asp-398, and Arg-402. The interval 434–522 is c; the sequence is GSTQERWINN…GTAVWQYTAA (89 aa). The segment at 523–609 is d; that stretch reads TATPTIGHVG…SNVYDNFEVL (87 aa). In terms of domain architecture, IPT/TIG spans 526-607; sequence PTIGHVGPMM…TASNVYDNFE (82 aa). A Ca(2+)-binding site is contributed by Asp-604. In terms of domain architecture, CBM20 spans 608–713; that stretch reads VLSGDQVSVR…TATINVNWQP (106 aa). The interval 610–713 is e; that stretch reads SGDQVSVRFV…TATINVNWQP (104 aa).

Belongs to the glycosyl hydrolase 13 family. As to quaternary structure, monomer. Requires Ca(2+) as cofactor.

It is found in the secreted. It catalyses the reaction Cyclizes part of a (1-&gt;4)-alpha-D-glucan chain by formation of a (1-&gt;4)-alpha-D-glucosidic bond.. This chain is Cyclomaltodextrin glucanotransferase (cgt), found in Niallia circulans (Bacillus circulans).